The following is a 926-amino-acid chain: Glycogenin (926 aa).

The UDP site is built by Leu-10, Thr-12, Tyr-16, and Arg-85. UDP-alpha-D-glucose is bound by residues Leu-10, Thr-12, Tyr-16, Arg-85, Lys-94, Asp-111, Ala-112, Asp-113, Asn-145, Ser-146, Asp-184, Asp-187, and Gln-188. Residues Asp-111, Ala-112, and Asp-113 each contribute to the UDP site. Asp-111 is a Mn(2+) binding site. Asp-113 lines the Mn(2+) pocket. O-linked (Glc...) tyrosine glycosylation is present at Tyr-219. 3 residues coordinate UDP: His-236, Gly-239, and Lys-242. His-236 provides a ligand contact to Mn(2+). The UDP-alpha-D-glucose site is built by Gly-239 and Lys-242. 5 disordered regions span residues 379–432 (PSVS…PEMS), 452–476 (YYAHPESHRPATEHKEPEYPTLPKE), 547–584 (SIQNPTPPHPAHSQHQSHATGMGMAGQAPKSPSPPPRH), 611–749 (MSGK…ETVQ), and 768–903 (LPHA…PNTD). Over residues 386–402 (LTPPPADAAPAPAPAPV) the composition is skewed to pro residues. Residues 404-413 (TQTEQKTAQP) are compositionally biased toward polar residues. Basic and acidic residues predominate over residues 456 to 469 (PESHRPATEHKEPE). Residues 557-566 (AHSQHQSHAT) are compositionally biased toward low complexity. The segment covering 655 to 683 (SLHSLQSVPGTPRTQYSTFGKSPRLTNAR) has biased composition (polar residues). The span at 692–704 (EQPEDSADGDDEN) shows a compositional bias: acidic residues. Residues 733–745 (DRWAQTDRVKTVD) are compositionally biased toward basic and acidic residues. The segment covering 788-798 (SGNGRAGGGGQ) has biased composition (gly residues). Residues 800-812 (EAQTQHQSTYYEY) show a composition bias toward polar residues. Low complexity-rich tracts occupy residues 813–824 (QQQHPHSQQSRQ) and 851–875 (HAQGLAQAQAQAHGQPQGQGANPNL).

It belongs to the glycosyltransferase 8 family. Glycogenin subfamily. Mn(2+) serves as cofactor.

It is found in the cytoplasm. Its subcellular location is the vacuole. It catalyses the reaction L-tyrosyl-[glycogenin] + UDP-alpha-D-glucose = alpha-D-glucosyl-L-tyrosyl-[glycogenin] + UDP + H(+). The enzyme catalyses [1,4-alpha-D-glucosyl](n)-L-tyrosyl-[glycogenin] + UDP-alpha-D-glucose = [1,4-alpha-D-glucosyl](n+1)-L-tyrosyl-[glycogenin] + UDP + H(+). In terms of biological role, self-glucosylating initiator of glycogen synthesis. It catalyzes the formation of a short alpha (1,4)-glucosyl chain covalently attached via a glucose 1-O-tyrosyl linkage to internal tyrosine residues and these chains act as primers for the elongation reaction catalyzed by glycogen synthase. This Cryptococcus neoformans var. grubii serotype A (strain H99 / ATCC 208821 / CBS 10515 / FGSC 9487) (Filobasidiella neoformans var. grubii) protein is Glycogenin.